A 139-amino-acid chain; its full sequence is Translation initiation factor 2 subunit beta (139 aa).

Belongs to the eIF-2-beta/eIF-5 family. Heterotrimer composed of an alpha, a beta and a gamma chain.

In terms of biological role, eIF-2 functions in the early steps of protein synthesis by forming a ternary complex with GTP and initiator tRNA. This chain is Translation initiation factor 2 subunit beta, found in Saccharolobus islandicus (strain Y.N.15.51 / Yellowstone #2) (Sulfolobus islandicus).